Reading from the N-terminus, the 668-residue chain is MAMPRATSGPAYPERFYAAASYVGLDGSDSSAKNVISKFPDDTALLLYALYQQATVGPCNTPKPSAWRPVEQSKWKSWQGLGTMPSIEAMRLFVKILEEDDPGWYSRASNDIPDPVVDVQINRAKDEPVVENGSTFSETKTISTENGRLAETQDKDVVSEDSNTVSVYNQWTAPQTSGQRPKARYEHGAAVIQDKMYIYGGNHNGRYLGDLHVLDLKSWTWSRVETKVATESQETSTPTLLAPCAGHSLIAWDNKLLSIGGHTKDPSESMQVKVFDPHTITWSMLKTYGKPPVSRGGQSVTMVGKTLVIFGGQDAKRSLLNDLHILDLDTMTWDEIDAVGVSPSPRSDHAAAVHAERFLLIFGGGSHATCFDDLHVLDLQTMEWSRPAQQGDAPTPRAGHAGVTIGENWFIVGGGDNKSGASESVVLNMSTLAWSVVASVQGRVPLASEGLSLVVSSYNGEDVLVAFGGYNGRYNNEINLLKPSHKSTLQTKTLEAPLPGSLSAVNNATTRDIESEVEVSQEGRVREIVMDNVNPGSKVEGNSERIIATIKSEKEELEASLNKERMQTLQLRQELGEAELRNTDLYKELQSVRGQLAAEQSRCFKLEVDVAELRQKLQTLETLQKELELLQRQKAASEQAAMNAKRQGSGGVWGWLAGSPQEKDDDSP.

An ACB domain is found at 12–106; sequence YPERFYAAAS…LEEDDPGWYS (95 aa). An acyl-CoA contacts are provided by residues K33, 48 to 52, and K74; that span reads YALYQ. Kelch repeat units follow at residues 195–242, 255–305, 307–356, 358–407, 408–456, and 463–508; these read KMYI…TLLA, KLLS…MVGK, LVIF…VHAE, FLLI…TIGE, NWFI…LVVS, and VLVA…VNNA. Phosphoserine occurs at positions 515 and 520. A coiled-coil region spans residues 538–647; that stretch reads KVEGNSERII…EQAAMNAKRQ (110 aa). Residues 639–668 are disordered; the sequence is QAAMNAKRQGSGGVWGWLAGSPQEKDDDSP.

This sequence belongs to the ACBP family. In terms of assembly, interacts with RAP2-3/EBP, an ethylene-responsive element binding protein. Mostly expressed in roots, stems, and leaves, and, to a lower extent, in flowers and siliques.

The protein localises to the cytoplasm. Functionally, binds medium- and long-chain acyl-CoA esters with very high affinity. Can interact in vitro with oleoyl-CoA, barely with palmitoyl-CoA, but not with arachidonyl-CoA. May function as an intracellular carrier of acyl-CoA esters. Plays a role in the biosynthesis of membrane lipids including galactolipids and phospholipids. The protein is Acyl-CoA-binding domain-containing protein 4 (ACBP4) of Arabidopsis thaliana (Mouse-ear cress).